Reading from the N-terminus, the 113-residue chain is Endoribonuclease SymE (113 aa).

In terms of domain architecture, SpoVT-AbrB spans 29–74; sequence SRYPDYSRIPAITLKGQWLEAAGFATGTAVVVKVMEGCIVLTAQPA.

It belongs to the SymE family.

Its subcellular location is the cytoplasm. Involved in the degradation and recycling of damaged RNA. It is itself a target for degradation by the ATP-dependent protease Lon. In Escherichia coli (strain ATCC 8739 / DSM 1576 / NBRC 3972 / NCIMB 8545 / WDCM 00012 / Crooks), this protein is Endoribonuclease SymE.